A 530-amino-acid chain; its full sequence is UDP-glucuronosyltransferase 2B17 (530 aa).

A signal peptide spans 1 to 23 (MSLKWMSVFLLMQLSCYFSSGSC). The N-linked (GlcNAc...) asparagine glycan is linked to Asn-65. Residue Lys-136 is modified to N6-succinyllysine. 2 N-linked (GlcNAc...) asparagine glycosylation sites follow: Asn-316 and Asn-483. Residues 495–515 (IAFLLACVATMIFMITKCCLF) form a helical membrane-spanning segment.

The protein belongs to the UDP-glycosyltransferase family. In terms of tissue distribution, expressed in various tissues including the liver, kidney, testis, uterus, placenta, mammary gland, adrenal gland, skin and prostate.

The protein resides in the endoplasmic reticulum membrane. It catalyses the reaction glucuronate acceptor + UDP-alpha-D-glucuronate = acceptor beta-D-glucuronoside + UDP + H(+). The catalysed reaction is 17alpha-estradiol + UDP-alpha-D-glucuronate = 17alpha-estradiol 3-O-(beta-D-glucuronate) + UDP + H(+). The enzyme catalyses 17alpha-estradiol + UDP-alpha-D-glucuronate = 17alpha-estradiol 17-O-(beta-D-glucuronate) + UDP + H(+). It carries out the reaction 17beta-estradiol + UDP-alpha-D-glucuronate = 17beta-estradiol 17-O-(beta-D-glucuronate) + UDP + H(+). It catalyses the reaction 17beta-hydroxy-5alpha-androstan-3-one + UDP-alpha-D-glucuronate = 5alpha-dihydrotestosterone 17-O-(beta-D-glucuronate) + UDP + H(+). The catalysed reaction is testosterone + UDP-alpha-D-glucuronate = testosterone 17-O-(beta-D-glucuronate) + UDP + H(+). UDP-glucuronosyltransferase (UGT) that catalyzes phase II biotransformation reactions in which lipophilic substrates are conjugated with glucuronic acid to increase the metabolite's water solubility, thereby facilitating excretion into either the urine or bile. Catalyzes the glucuronidation of endogenous steroid hormones such as androgens (epitestosterone, androsterone) and estrogens (estradiol, epiestradiol). The sequence is that of UDP-glucuronosyltransferase 2B17 from Homo sapiens (Human).